The following is a 371-amino-acid chain: Aldose sugar dehydrogenase YliI (371 aa).

The signal sequence occupies residues 1-20 (MHRQSFFLVPLICLSSALWA). Glutamine 82 contributes to the pyrroloquinoline quinone binding site. Histidine 147 (proton acceptor) is an active-site residue. The PQQ stretch occupies residues 214–215 (RN). Ca(2+)-binding residues include glutamate 240 and tyrosine 250. Tyrosine 261 contacts pyrroloquinoline quinone. 2 PQQ regions span residues 312–314 (ALK) and 341–343 (RIR).

Belongs to the PQQ oxidoreductase GdhB family. In terms of assembly, monomer. Ca(2+) is required as a cofactor. It depends on pyrroloquinoline quinone as a cofactor.

It localises to the cell outer membrane. In terms of biological role, aldose sugar dehydrogenase with broad substrate specificity. The physiological substrate is unknown. Can oxidize glucose to gluconolactone. Can also utilize D-arabinose, L-arabinose and 2-deoxy-glucose. Has higher activity towards oligomeric sugars, such as maltose, maltotriose or cellobiose. It may function to input sugar-derived electrons into the respiratory network. This is Aldose sugar dehydrogenase YliI (yliI) from Escherichia coli (strain K12).